The chain runs to 77 residues: Large ribosomal subunit protein uL24 (77 aa).

This sequence belongs to the universal ribosomal protein uL24 family. Part of the 50S ribosomal subunit.

Functionally, one of two assembly initiator proteins, it binds directly to the 5'-end of the 23S rRNA, where it nucleates assembly of the 50S subunit. In terms of biological role, one of the proteins that surrounds the polypeptide exit tunnel on the outside of the subunit. The chain is Large ribosomal subunit protein uL24 from Campylobacter jejuni subsp. doylei (strain ATCC BAA-1458 / RM4099 / 269.97).